The sequence spans 511 residues: Probable eukaryotic translation initiation factor 4H (511 aa).

Disordered regions lie at residues 25-63 (SWAD…DRGS) and 154-511 (TIRV…EVKI). The span at 39-51 (AREESGSGLKRGD) shows a compositional bias: basic and acidic residues. The 77-residue stretch at 86–162 (FTAFIGNLSF…RTIRVNVAEA (77 aa)) folds into the RRM domain. Residues 179–196 (WRRSTPLASRESSSQPSR) are compositionally biased toward polar residues. Basic and acidic residues-rich tracts occupy residues 230 to 247 (VRRD…RDPG) and 261 to 270 (LAEKVDRDVP). Over residues 285–318 (LADTEQTWSRGTKLRTPTTTSRQSSADSTPSSGA) the composition is skewed to polar residues. Residues 331 to 349 (TAGSPSATANATPAAPASG) show a composition bias toward low complexity. Ser-334 carries the post-translational modification Phosphoserine. Composition is skewed to basic and acidic residues over residues 360-388 (AARE…EKQK) and 394-419 (KPVE…DKVA). Low complexity predominate over residues 420 to 434 (GKPTTAPATTTNTGA). Residues 438–448 (GSADRAKKDEQ) are compositionally biased toward basic and acidic residues. Polar residues predominate over residues 451-467 (EQVQPSRKSSQTGATSE). Basic and acidic residues predominate over residues 502–511 (VTKGVEEVKI).

The protein localises to the cytoplasm. The protein resides in the P-body. Probable translation initiation factor. In Cryptococcus neoformans var. grubii serotype A (strain H99 / ATCC 208821 / CBS 10515 / FGSC 9487) (Filobasidiella neoformans var. grubii), this protein is Probable eukaryotic translation initiation factor 4H.